We begin with the raw amino-acid sequence, 297 residues long: MKDQLQPGVSLALLTAYQVGGPAEWYLQPTKAEVLDEALGWARRSELPVTVIGAGTNLLISDVGIGGLVVHLRSWRGTQILEEGLIEVKAGESIAALAFQTARRGWAGLEWAVGVPGSIGGAVVMNAGAHGAQFSDTLESVEVLTETGERRRVAAGELGLTYRSSLLQQRDWVVLSARLRLAPGHQPARLIEHIDEFNTFRHRTQPSGFPNCGSVFRNPGGEKKAGWMLDRSGLKGQSVGAAQVAEQHANFILNRGGATARDILTLMTRMRDRVVADWGIALKPEVRFLGRGLNWAG.

The region spanning 18 to 184 (QVGGPAEWYL…LSARLRLAPG (167 aa)) is the FAD-binding PCMH-type domain. The active site involves Arg-163. Ser-214 functions as the Proton donor in the catalytic mechanism. Glu-285 is a catalytic residue.

The cofactor is FAD.

The protein resides in the cytoplasm. The enzyme catalyses UDP-N-acetyl-alpha-D-muramate + NADP(+) = UDP-N-acetyl-3-O-(1-carboxyvinyl)-alpha-D-glucosamine + NADPH + H(+). It participates in cell wall biogenesis; peptidoglycan biosynthesis. Cell wall formation. This is UDP-N-acetylenolpyruvoylglucosamine reductase from Gloeobacter violaceus (strain ATCC 29082 / PCC 7421).